Here is a 329-residue protein sequence, read N- to C-terminus: DNA-directed RNA polymerase subunit alpha (329 aa).

An alpha N-terminal domain (alpha-NTD) region spans residues 1–235 (MVREKVKVST…DLFIPFLHTE (235 aa)). The interval 269–329 (IALKYIFIDQ…KQILGILEKK (61 aa)) is alpha C-terminal domain (alpha-CTD).

This sequence belongs to the RNA polymerase alpha chain family. As to quaternary structure, in plastids the minimal PEP RNA polymerase catalytic core is composed of four subunits: alpha, beta, beta', and beta''. When a (nuclear-encoded) sigma factor is associated with the core the holoenzyme is formed, which can initiate transcription.

It localises to the plastid. It is found in the chloroplast. The catalysed reaction is RNA(n) + a ribonucleoside 5'-triphosphate = RNA(n+1) + diphosphate. In terms of biological role, DNA-dependent RNA polymerase catalyzes the transcription of DNA into RNA using the four ribonucleoside triphosphates as substrates. In Gossypium hirsutum (Upland cotton), this protein is DNA-directed RNA polymerase subunit alpha.